Consider the following 316-residue polypeptide: Ornithine carbamoyltransferase (316 aa).

Residues 59–62, Gln-86, Arg-110, and 137–140 contribute to the carbamoyl phosphate site; these read STRT and HPCQ. L-ornithine-binding positions include Asn-168, Asp-232, and 236-237; that span reads SM. Residues 273 to 274 and Arg-301 each bind carbamoyl phosphate; that span reads CL.

Belongs to the aspartate/ornithine carbamoyltransferase superfamily. OTCase family.

Its subcellular location is the cytoplasm. It carries out the reaction carbamoyl phosphate + L-ornithine = L-citrulline + phosphate + H(+). It participates in amino-acid biosynthesis; L-arginine biosynthesis; L-arginine from L-ornithine and carbamoyl phosphate: step 1/3. Reversibly catalyzes the transfer of the carbamoyl group from carbamoyl phosphate (CP) to the N(epsilon) atom of ornithine (ORN) to produce L-citrulline. This is Ornithine carbamoyltransferase from Listeria monocytogenes serotype 4b (strain F2365).